The chain runs to 420 residues: Subtilisin-like protease 7 (420 aa).

An N-terminal signal peptide occupies residues 1–20; sequence MGFITKAIPLALAAASVING. The propeptide occupies 21-119; the sequence is AEIMETRAGV…IERDARVQIN (99 aa). One can recognise an Inhibitor I9 domain in the interval 36–118; that stretch reads KYIVVMNDGM…YIERDARVQI (83 aa). Positions 129–413 constitute a Peptidase S8 domain; that stretch reads SWGLARVGSK…SFPLNIYEEQ (285 aa). Active-site charge relay system residues include Asp161 and His192. 2 N-linked (GlcNAc...) asparagine glycosylation sites follow: Asn222 and Asn252. The active-site Charge relay system is the Ser346. Asn396 carries N-linked (GlcNAc...) asparagine glycosylation.

Belongs to the peptidase S8 family.

Its subcellular location is the secreted. Its function is as follows. Secreted subtilisin-like serine protease with keratinolytic activity that contributes to pathogenicity. This chain is Subtilisin-like protease 7 (SUB7), found in Arthroderma benhamiae (strain ATCC MYA-4681 / CBS 112371) (Trichophyton mentagrophytes).